The primary structure comprises 234 residues: Lipoprotein-releasing system ATP-binding protein LolD (234 aa).

An ABC transporter domain is found at 7–234; it reads LLCNNLCKKY…QDELTVTGAL (228 aa). An ATP-binding site is contributed by 43 to 50; the sequence is GSSGSGKS.

It belongs to the ABC transporter superfamily. Lipoprotein translocase (TC 3.A.1.125) family. As to quaternary structure, the complex is composed of two ATP-binding proteins (LolD) and two transmembrane proteins (LolC and LolE).

The protein localises to the cell inner membrane. Part of the ABC transporter complex LolCDE involved in the translocation of mature outer membrane-directed lipoproteins, from the inner membrane to the periplasmic chaperone, LolA. Responsible for the formation of the LolA-lipoprotein complex in an ATP-dependent manner. In Photorhabdus laumondii subsp. laumondii (strain DSM 15139 / CIP 105565 / TT01) (Photorhabdus luminescens subsp. laumondii), this protein is Lipoprotein-releasing system ATP-binding protein LolD.